We begin with the raw amino-acid sequence, 310 residues long: 4-hydroxyproline epimerase (310 aa).

Cys88 functions as the Proton acceptor in the catalytic mechanism. Substrate contacts are provided by residues 89–90 (GH), His208, and Asp232. Catalysis depends on Cys236, which acts as the Proton donor. 237–238 (GT) is a substrate binding site.

The protein belongs to the proline racemase family. In terms of assembly, homodimer.

It catalyses the reaction trans-4-hydroxy-L-proline = cis-4-hydroxy-D-proline. With respect to regulation, inhibited by iodoacetate, iodoacetamide and by high amounts (10 mM) of pyrrole-2-carboxylic acid (PYC). Not inhibited by PYC at 1 mM. Functionally, allows intracellular utilization of 4-hydroxyproline, one of the major constituents of host collagen, by converting 4-hydroxy-L-proline to 4-hydroxy-D-proline, which can be further metabolized by intracellular 4-hydroxy-D-proline oxidases. This chain is 4-hydroxyproline epimerase, found in Burkholderia pseudomallei (strain K96243).